The chain runs to 375 residues: Thioredoxin reductase 1, mitochondrial (375 aa).

Residues 1–37 constitute a mitochondrion transit peptide; that stretch reads MNCVSRLKCLISKARSFARLGGESTLSQPPSLASAAF. FAD is bound by residues 58–61, 79–80, 87–92, N101, V134, C192, D337, and 344–346; these read SGPA, FE, IAPGGQ, and RQA. A disulfide bond links C189 and C192.

This sequence belongs to the class-II pyridine nucleotide-disulfide oxidoreductase family. As to quaternary structure, homodimer. The cofactor is FAD. In terms of tissue distribution, ubiquitous.

Its subcellular location is the cytoplasm. It is found in the mitochondrion. The enzyme catalyses [thioredoxin]-dithiol + NADP(+) = [thioredoxin]-disulfide + NADPH + H(+). In terms of biological role, NADPH-dependent thioredoxin-disulfide reductase that reduces thioredoxins O1, O2 and F3. This chain is Thioredoxin reductase 1, mitochondrial (NTR1), found in Arabidopsis thaliana (Mouse-ear cress).